The following is a 728-amino-acid chain: Procollagen-lysine,2-oxoglutarate 5-dioxygenase 1 (728 aa).

Residues 1-18 form the signal peptide; sequence MRSLLLLAPLAWLLLVQA. N-linked (GlcNAc...) asparagine glycans are attached at residues asparagine 198 and asparagine 539. In terms of domain architecture, Fe2OG dioxygenase spans 637 to 728; sequence QFDLAFVVRY…RYIAVSFVDP (92 aa). Fe cation is bound by residues histidine 657 and aspartate 659. N-linked (GlcNAc...) asparagine glycosylation occurs at asparagine 687. Fe cation is bound at residue histidine 709. Residue arginine 719 is part of the active site.

In terms of assembly, homodimer. Identified in a complex with P3H3 and P3H4. Requires Fe(2+) as cofactor. It depends on L-ascorbate as a cofactor. Highly expressed in the liver, heart, lung, skeletal muscle and kidney.

It localises to the rough endoplasmic reticulum membrane. The enzyme catalyses L-lysyl-[collagen] + 2-oxoglutarate + O2 = (5R)-5-hydroxy-L-lysyl-[collagen] + succinate + CO2. Functionally, part of a complex composed of PLOD1, P3H3 and P3H4 that catalyzes hydroxylation of lysine residues in collagen alpha chains and is required for normal assembly and cross-linkling of collagen fibrils. Forms hydroxylysine residues in -Xaa-Lys-Gly- sequences in collagens. These hydroxylysines serve as sites of attachment for carbohydrate units and are essential for the stability of the intermolecular collagen cross-links. This Mus musculus (Mouse) protein is Procollagen-lysine,2-oxoglutarate 5-dioxygenase 1 (Plod1).